The chain runs to 387 residues: Intraflagellar transport protein 57 (387 aa).

Belongs to the IFT57 family.

It is found in the cell projection. It localises to the cilium. The protein resides in the flagellum. Its subcellular location is the cytoplasm. The protein localises to the cytoskeleton. It is found in the flagellum axoneme. It localises to the flagellum basal body. Its function is as follows. Component of the intraflagellar transport complex B (IFT-B) involved in flagellar assembly. In Giardia intestinalis (strain ATCC 50803 / WB clone C6) (Giardia lamblia), this protein is Intraflagellar transport protein 57.